Reading from the N-terminus, the 290-residue chain is Xylanase inhibitor protein 2 (290 aa).

The N-terminal stretch at 1-27 (MGLVHALLPFAAAAALLLLAAPPPATA) is a signal peptide. Residues 30 to 290 (PGLAVYWGRH…DKKANYTGEG (261 aa)) enclose the GH18 domain. Cysteine 49 and cysteine 89 are oxidised to a cystine. Asparagine 112 is a glycosylation site (N-linked (GlcNAc...) asparagine). Cysteine 187 and cysteine 216 are oxidised to a cystine. Asparagine 285 carries an N-linked (GlcNAc...) asparagine glycan.

It belongs to the glycosyl hydrolase 18 family. Xylanase inhibitor subfamily. In terms of assembly, binds to fungal GH10 xylanases.

The protein localises to the secreted. In terms of biological role, fungal xylanase inhibitor. Possesses competitive inhibiting activity against several fungal endo-1,4-beta-D-xylanases belonging to glycoside hydrolase family 10 (GH10) and family 11 (GH11). May function in plant defense against secreted fungal pathogen xylanases. Is similar to class III chitinases, but does not exhibit chitinase activity. In Oryza sativa subsp. japonica (Rice), this protein is Xylanase inhibitor protein 2.